Here is a 107-residue protein sequence, read N- to C-terminus: Large ribosomal subunit protein bL21 (107 aa).

This sequence belongs to the bacterial ribosomal protein bL21 family. As to quaternary structure, part of the 50S ribosomal subunit. Contacts protein L20.

This protein binds to 23S rRNA in the presence of protein L20. This is Large ribosomal subunit protein bL21 from Pseudothermotoga lettingae (strain ATCC BAA-301 / DSM 14385 / NBRC 107922 / TMO) (Thermotoga lettingae).